Reading from the N-terminus, the 1159-residue chain is Syntaxin-binding protein 5-like (1159 aa).

The segment at 1–37 (MKKFRKVLDGLTTSSPVNPGGSPGCGSAAGTPSAAPT) is disordered. Over residues 25-37 (CGSAAGTPSAAPT) the composition is skewed to low complexity. WD repeat units lie at residues 67–108 (TALA…CHSQ), 115–154 (VLQM…SLKF), 159–195 (ITFC…GYVI), 214–248 (HLSD…DFRI), 254–286 (IHSV…TAKP), 307–350 (PILK…KAIT), 358–392 (IVDF…VVDL), 414–491 (TCTA…YKLK), 519–628 (QMIS…ELVV), and 642–703 (TCLD…STSG). Disordered regions lie at residues 571–604 (SDTE…SVRD) and 690–770 (LTRS…KAQS). Composition is skewed to polar residues over residues 699–713 (QSTS…NQVS) and 721–739 (SPTS…SQPC). WD repeat units lie at residues 808–865 (VTTL…TGTV), 874–946 (RFGF…QACL), 951–995 (ITES…LDVS), and 1009–1032 (CFTN…TYSQ). A v-SNARE coiled-coil homology domain is found at 1094–1154 (GIEGMKAAAG…HELMLKCKDK (61 aa)).

It belongs to the WD repeat L(2)GL family.

Its subcellular location is the cytoplasm. It localises to the cell membrane. It is found in the membrane. Its function is as follows. May play a role in vesicle trafficking and exocytosis. The chain is Syntaxin-binding protein 5-like (stxbp5l) from Danio rerio (Zebrafish).